Consider the following 194-residue polypeptide: RNA polymerase II subunit A C-terminal domain phosphatase SSU72 like protein 1 (194 aa).

Belongs to the SSU72 phosphatase family.

Its subcellular location is the nucleus. The enzyme catalyses O-phospho-L-seryl-[protein] + H2O = L-seryl-[protein] + phosphate. The catalysed reaction is O-phospho-L-threonyl-[protein] + H2O = L-threonyl-[protein] + phosphate. Functionally, protein phosphatase that catalyzes the dephosphorylation of the C-terminal domain of RNA polymerase II. Plays a role in RNA processing and termination. This Homo sapiens (Human) protein is RNA polymerase II subunit A C-terminal domain phosphatase SSU72 like protein 1.